We begin with the raw amino-acid sequence, 274 residues long: 2,3,4,5-tetrahydropyridine-2,6-dicarboxylate N-succinyltransferase (274 aa).

The substrate site is built by R104 and D141.

The protein belongs to the transferase hexapeptide repeat family. Homotrimer.

The protein localises to the cytoplasm. It catalyses the reaction (S)-2,3,4,5-tetrahydrodipicolinate + succinyl-CoA + H2O = (S)-2-succinylamino-6-oxoheptanedioate + CoA. It functions in the pathway amino-acid biosynthesis; L-lysine biosynthesis via DAP pathway; LL-2,6-diaminopimelate from (S)-tetrahydrodipicolinate (succinylase route): step 1/3. The polypeptide is 2,3,4,5-tetrahydropyridine-2,6-dicarboxylate N-succinyltransferase (Serratia proteamaculans (strain 568)).